A 282-amino-acid chain; its full sequence is Putative hydrolase BceJ2315_61450 (282 aa).

Residues E124, E126, and D155 each contribute to the Mg(2+) site.

Belongs to the FAH family. Mg(2+) is required as a cofactor.

In Burkholderia cenocepacia (strain ATCC BAA-245 / DSM 16553 / LMG 16656 / NCTC 13227 / J2315 / CF5610) (Burkholderia cepacia (strain J2315)), this protein is Putative hydrolase BceJ2315_61450.